The primary structure comprises 119 residues: MVKLAFPRELRLLTPKHFNFVFQQPQRASSPEVTILGRQNELGHPRIGLTIAKKNVKRAHERNRIKRLAREYFRLHQHQLPAMDFVVLVRKGVAELDNHQLTEVLGKLWRRHCRLAQKS.

It belongs to the RnpA family. As to quaternary structure, consists of a catalytic RNA component (M1 or rnpB) and a protein subunit.

It catalyses the reaction Endonucleolytic cleavage of RNA, removing 5'-extranucleotides from tRNA precursor.. RNaseP catalyzes the removal of the 5'-leader sequence from pre-tRNA to produce the mature 5'-terminus. It can also cleave other RNA substrates such as 4.5S RNA. The protein component plays an auxiliary but essential role in vivo by binding to the 5'-leader sequence and broadening the substrate specificity of the ribozyme. The chain is Ribonuclease P protein component from Proteus mirabilis (strain HI4320).